The primary structure comprises 403 residues: Phosphopentomutase (403 aa).

Mn(2+) is bound by residues Asp13, Asp298, His303, Asp339, His340, and His351.

Belongs to the phosphopentomutase family. The cofactor is Mn(2+).

The protein resides in the cytoplasm. The catalysed reaction is 2-deoxy-alpha-D-ribose 1-phosphate = 2-deoxy-D-ribose 5-phosphate. It carries out the reaction alpha-D-ribose 1-phosphate = D-ribose 5-phosphate. It functions in the pathway carbohydrate degradation; 2-deoxy-D-ribose 1-phosphate degradation; D-glyceraldehyde 3-phosphate and acetaldehyde from 2-deoxy-alpha-D-ribose 1-phosphate: step 1/2. In terms of biological role, isomerase that catalyzes the conversion of deoxy-ribose 1-phosphate (dRib-1-P) and ribose 1-phosphate (Rib-1-P) to deoxy-ribose 5-phosphate (dRib-5-P) and ribose 5-phosphate (Rib-5-P), respectively. This chain is Phosphopentomutase, found in Streptococcus pyogenes serotype M4 (strain MGAS10750).